Reading from the N-terminus, the 200-residue chain is GTP cyclohydrolase-2 (200 aa).

49–53 (RVHSE) is a binding site for GTP. Positions 54, 65, and 67 each coordinate Zn(2+). GTP is bound by residues Gln70, 92-94 (EGR), and Thr114. Asp126 (proton acceptor) is an active-site residue. The active-site Nucleophile is the Arg128. Residues Thr149 and Lys154 each contribute to the GTP site.

This sequence belongs to the GTP cyclohydrolase II family. In terms of assembly, homodimer. Requires Zn(2+) as cofactor.

The catalysed reaction is GTP + 4 H2O = 2,5-diamino-6-hydroxy-4-(5-phosphoribosylamino)-pyrimidine + formate + 2 phosphate + 3 H(+). The protein operates within cofactor biosynthesis; riboflavin biosynthesis; 5-amino-6-(D-ribitylamino)uracil from GTP: step 1/4. In terms of biological role, catalyzes the conversion of GTP to 2,5-diamino-6-ribosylamino-4(3H)-pyrimidinone 5'-phosphate (DARP), formate and pyrophosphate. This Klebsiella pneumoniae subsp. pneumoniae (strain ATCC 700721 / MGH 78578) protein is GTP cyclohydrolase-2.